Reading from the N-terminus, the 404-residue chain is Sulfate adenylyltransferase (404 aa).

This sequence belongs to the sulfate adenylyltransferase family.

It carries out the reaction sulfate + ATP + H(+) = adenosine 5'-phosphosulfate + diphosphate. Its pathway is sulfur metabolism; hydrogen sulfide biosynthesis; sulfite from sulfate: step 1/3. This Chlorobium chlorochromatii (strain CaD3) protein is Sulfate adenylyltransferase.